Here is a 305-residue protein sequence, read N- to C-terminus: Ribosomal RNA small subunit methyltransferase H (305 aa).

Residues 30-32, aspartate 49, phenylalanine 74, aspartate 96, and glutamine 103 each bind S-adenosyl-L-methionine; that span reads GGH.

This sequence belongs to the methyltransferase superfamily. RsmH family.

Its subcellular location is the cytoplasm. The enzyme catalyses cytidine(1402) in 16S rRNA + S-adenosyl-L-methionine = N(4)-methylcytidine(1402) in 16S rRNA + S-adenosyl-L-homocysteine + H(+). Specifically methylates the N4 position of cytidine in position 1402 (C1402) of 16S rRNA. This is Ribosomal RNA small subunit methyltransferase H from Francisella tularensis subsp. tularensis (strain FSC 198).